The following is a 471-amino-acid chain: Monocarboxylate transporter 4 (471 aa).

At Met-1–Asp-17 the chain is on the cytoplasmic side. The helical transmembrane segment at Gly-18–Phe-38 threads the bilayer. Residues Pro-39–Ala-61 are Extracellular-facing. The chain crosses the membrane as a helical span at residues Trp-62–Val-82. At Asn-83–Arg-84 the chain is on the cytoplasmic side. The chain crosses the membrane as a helical span at residues Phe-85–Ala-105. Residues Ser-106–Arg-109 lie on the Extracellular side of the membrane. Residues Ser-110–Phe-130 form a helical membrane-spanning segment. The Cytoplasmic portion of the chain corresponds to Gln-131–Asn-149. Residues Gly-150–Leu-170 traverse the membrane as a helical segment. At Gln-171–Gly-179 the chain is on the extracellular side. The helical transmembrane segment at Phe-180 to Leu-200 threads the bilayer. At Val-201–Gly-231 the chain is on the cytoplasmic side. A helical membrane pass occupies residues Phe-232 to Phe-252. At Val-253–Ala-267 the chain is on the extracellular side. The helical transmembrane segment at Ala-268–Ile-288 threads the bilayer. Over Thr-289–Ser-298 the chain is Cytoplasmic. The chain crosses the membrane as a helical span at residues Val-299–Ala-319. The Extracellular segment spans residues Ser-320–Asp-321. The helical transmembrane segment at Tyr-322–Leu-342 threads the bilayer. Residues Gln-343–Lys-355 lie on the Cytoplasmic side of the membrane. Residues Phe-356 to Pro-376 traverse the membrane as a helical segment. Topologically, residues Ser-377 to Val-391 are extracellular. A helical transmembrane segment spans residues Phe-392–Phe-412. Over Cys-413 to Val-471 the chain is Cytoplasmic. Basolateral sorting signal stretches follow at residues Ala-429–Arg-447 and Arg-447–Val-471. Position 430 is a phosphoserine (Ser-430). Thr-466 carries the post-translational modification Phosphothreonine. Ser-470 carries the post-translational modification Phosphoserine.

Belongs to the major facilitator superfamily. Monocarboxylate porter (TC 2.A.1.13) family. In terms of assembly, interacts with BSG; interaction mediates SLC16A3 targeting to the plasma membrane. Detected in testis, small intestine, parotid gland, lung and brain. Small amounts are detected in heart, kidney and spleen. Expressed in skeletal muscle.

The protein resides in the cell membrane. It localises to the basolateral cell membrane. It carries out the reaction (S)-lactate(in) + H(+)(in) = (S)-lactate(out) + H(+)(out). The catalysed reaction is pyruvate(out) + H(+)(out) = pyruvate(in) + H(+)(in). Functionally, proton-dependent transporter of monocarboxylates such as L-lactate and pyruvate. Plays a predominant role in the L-lactate efflux from highly glycolytic cells. In Rattus norvegicus (Rat), this protein is Monocarboxylate transporter 4 (Slc16a3).